The following is a 299-amino-acid chain: Taste receptor type 2 member 5 (299 aa).

Met1 is a topological domain (extracellular). A helical transmembrane segment spans residues 2–22; it reads LSAGLGLLMLVAVVEFLIGLI. Topologically, residues 23–45 are cytoplasmic; the sequence is GNGVLVVWSFREWIRKFSWSSYN. Residues 46–66 form a helical membrane-spanning segment; it reads LIILGLAGCRFVLQWLIILDL. Topologically, residues 67–82 are extracellular; sequence SLFPLFQSSRWLRYLS. Residues 83 to 103 form a helical membrane-spanning segment; the sequence is IFWVLVSQASLWFATFLSVFY. The Cytoplasmic portion of the chain corresponds to 104–127; it reads CKKITTFDHPAYLWLKQRAYNLSL. The helical transmembrane segment at 128-148 threads the bilayer; it reads WCLLGYFIINLLLTVQIGLMF. Topologically, residues 149 to 175 are extracellular; sequence YHPPQGNSSIRYPFESWQYLYAFRLNS. N-linked (GlcNAc...) asparagine glycosylation is present at Asn155. The chain crosses the membrane as a helical span at residues 176–196; the sequence is GSYLPLMVFLVSSGMLIVSLY. The Cytoplasmic portion of the chain corresponds to 197–223; the sequence is THHKKMKVHSAGRRDVRAKAHITALKS. The chain crosses the membrane as a helical span at residues 224–244; the sequence is LGCFLLLHLVYIMASPFSIAS. At 245–253 the chain is on the extracellular side; that stretch reads KTYPPDLTS. A helical membrane pass occupies residues 254–274; the sequence is VFIWETLMAAYPSLHSLILIM. The Cytoplasmic portion of the chain corresponds to 275 to 299; sequence GIPRVKQTCQKIXWKTVCARRCWGP.

The protein belongs to the G-protein coupled receptor T2R family.

It is found in the membrane. Functionally, receptor that may play a role in the perception of bitterness and is gustducin-linked. May play a role in sensing the chemical composition of the gastrointestinal content. The activity of this receptor may stimulate alpha gustducin, mediate PLC-beta-2 activation and lead to the gating of TRPM5. In Pan troglodytes (Chimpanzee), this protein is Taste receptor type 2 member 5 (TAS2R5).